Consider the following 286-residue polypeptide: Quinone oxidoreductase 2 (286 aa).

NADP(+) is bound by residues 6–11 (GATGQL), R33, 73–75 (SSS), 138–143 (GWYSEN), and R171.

It belongs to the NmrA-type oxidoreductase family. In terms of assembly, monomer.

It carries out the reaction a quinone + NADH + H(+) = a quinol + NAD(+). It catalyses the reaction a quinone + NADPH + H(+) = a quinol + NADP(+). In terms of biological role, quinone oxidoreductase that may play some additional role beyond quinone reduction. Potential redox sensor protein. Overexpression induces retardation of growth. The protein is Quinone oxidoreductase 2 (qorB) of Escherichia coli (strain K12).